The primary structure comprises 252 residues: Uracil-DNA glycosylase (252 aa).

The Proton acceptor role is filled by Asp87.

Belongs to the uracil-DNA glycosylase (UDG) superfamily. UNG family.

It is found in the host nucleus. It catalyses the reaction Hydrolyzes single-stranded DNA or mismatched double-stranded DNA and polynucleotides, releasing free uracil.. Functionally, excises uracil residues from the DNA which can arise as a result of misincorporation of dUMP residues by DNA polymerase or deamination of cytosines. Therefore may reduce deleterious uracil incorporation into the viral genome, particularly in terminally differentiated cells which lack DNA repair enzymes. The polypeptide is Uracil-DNA glycosylase (46) (Alcelaphine herpesvirus 1 (strain C500) (AlHV-1)).